We begin with the raw amino-acid sequence, 346 residues long: MARDLIGPALPPGFKEHATVEDEERDPSPVAGPALPPNYRSCSSDSSDSDEDSSSLSEEGNQESEEEDTGPNAKKQRRNQDDDDDDDGFFGPALPPGFKKQDDSPPRPIIGPALPPGFIKSPQKNDKGREDPGQVSSFFNSEEAESGEDEDIVGPMPAKGPVNYSVTTEFEKRAQRMKEKLTKGDDDSSKPITRESWMTELPPEMKEFGLGPRTFKRRADDKSGDRSVWTDTPADRERKAKEIQEARKSFSKKDEENILSGRDKRLAEQVSSYNESKRSESLMDIHHKKLKSKAAEDKNKHQERIPFDRDKDLKVNRFDEAQKKALIKKSRELNTRFSHGKGNMFL.

2 disordered regions span residues 1–283 (MARD…ESLM) and 289–308 (KLKS…IPFD). An N-acetylalanine modification is found at alanine 2. The short motif at 7–12 (GPALPP) is the GPALPP motif 1 element. Residue serine 28 is modified to Phosphoserine. Positions 32–37 (GPALPP) match the GPALPP motif 2 motif. Residues 60-69 (GNQESEEEDT) show a composition bias toward acidic residues. Positions 91 to 96 (GPALPP) match the GPALPP motif 3 motif. A Phosphoserine modification is found at serine 104. Residues 106-115 (PRPIIGPALP) are compositionally biased toward pro residues. The GPALPP motif 4 signature appears at 111–116 (GPALPP). Positions 123-132 (QKNDKGREDP) are enriched in basic and acidic residues. 3 positions are modified to phosphoserine: serine 136, serine 141, and serine 146. The span at 142–152 (EEAESGEDEDI) shows a compositional bias: acidic residues. 2 stretches are compositionally biased toward basic and acidic residues: residues 169–193 (EFEK…KPIT) and 233–267 (PADR…KRLA). Residue lysine 277 forms a Glycyl lysine isopeptide (Lys-Gly) (interchain with G-Cter in SUMO2) linkage. A compositionally biased stretch (basic and acidic residues) spans 293–308 (KAAEDKNKHQERIPFD). Residue lysine 314 forms a Glycyl lysine isopeptide (Lys-Gly) (interchain with G-Cter in SUMO2) linkage.

The polypeptide is GPALPP motifs-containing protein 1 (Gpalpp1) (Mus musculus (Mouse)).